Consider the following 139-residue polypeptide: Endoribonuclease YbeY (139 aa).

Zn(2+) is bound by residues H99, H103, and H109.

It belongs to the endoribonuclease YbeY family. It depends on Zn(2+) as a cofactor.

Its subcellular location is the cytoplasm. In terms of biological role, single strand-specific metallo-endoribonuclease involved in late-stage 70S ribosome quality control and in maturation of the 3' terminus of the 16S rRNA. The chain is Endoribonuclease YbeY from Sulfurimonas denitrificans (strain ATCC 33889 / DSM 1251) (Thiomicrospira denitrificans (strain ATCC 33889 / DSM 1251)).